The sequence spans 378 residues: Acetylornithine deacetylase (378 aa).

His-76 is a Zn(2+) binding site. The active site involves Asp-78. Asp-108 serves as a coordination point for Zn(2+). Residue Glu-140 is part of the active site. Positions 141, 165, and 351 each coordinate Zn(2+).

This sequence belongs to the peptidase M20A family. ArgE subfamily. Homodimer. It depends on Zn(2+) as a cofactor. The cofactor is Co(2+). Glutathione is required as a cofactor.

The protein localises to the cytoplasm. The enzyme catalyses N(2)-acetyl-L-ornithine + H2O = L-ornithine + acetate. It functions in the pathway amino-acid biosynthesis; L-arginine biosynthesis; L-ornithine from N(2)-acetyl-L-ornithine (linear): step 1/1. In terms of biological role, catalyzes the hydrolysis of the amide bond of N(2)-acetylated L-amino acids. Cleaves the acetyl group from N-acetyl-L-ornithine to form L-ornithine, an intermediate in L-arginine biosynthesis pathway, and a branchpoint in the synthesis of polyamines. The polypeptide is Acetylornithine deacetylase (Vibrio campbellii (strain ATCC BAA-1116)).